The primary structure comprises 274 residues: 3',5'-cyclic adenosine monophosphate phosphodiesterase CpdA (274 aa).

Fe cation is bound by residues aspartate 21, histidine 23, aspartate 63, asparagine 93, histidine 163, histidine 202, and histidine 204. AMP is bound by residues histidine 23, aspartate 63, and 93–94; that span reads NH. Residue histidine 204 coordinates AMP.

The protein belongs to the cyclic nucleotide phosphodiesterase class-III family. Requires Fe(2+) as cofactor.

The enzyme catalyses 3',5'-cyclic AMP + H2O = AMP + H(+). Its function is as follows. Hydrolyzes cAMP to 5'-AMP. Plays an important regulatory role in modulating the intracellular concentration of cAMP, thereby influencing cAMP-dependent processes. This chain is 3',5'-cyclic adenosine monophosphate phosphodiesterase CpdA, found in Vibrio vulnificus (strain CMCP6).